A 667-amino-acid chain; its full sequence is E3 ubiquitin-protein ligase RNF6 (667 aa).

Disordered regions lie at residues 1 to 25 (MDPS…RRWQ), 75 to 100 (KEQL…RAHS), 116 to 216 (GNVT…QGSF), 295 to 355 (FSSR…TPLS), 396 to 419 (ETRD…STVE), 507 to 532 (GDAA…GAEM), and 537 to 556 (EPAP…QLGR). Residues 79–90 (ASQPGSDSAASD) show a composition bias toward low complexity. A compositionally biased stretch (polar residues) spans 116-139 (GNVTRSGQNGNQSWRAVSRTNPNS). The span at 150 to 163 (INPDNRGSEMHGED) shows a compositional bias: basic and acidic residues. Positions 191–200 (SQTSMSSSGP) are enriched in low complexity. Residues 296-327 (SSRSRSPIQRQNGTVHHNSQRQGRPVQQTGRN) show a composition bias toward polar residues. Over residues 516–530 (HGRASSQASQAQDGA) the composition is skewed to low complexity. At Ser-559 the chain carries Phosphoserine. The RING-type; atypical zinc finger occupies 614-655 (CSVCISDYVAGNKLRQLPCLHEFHIHCIDRWLSENCTCPVCR).

Belongs to the RNF12 family. In terms of tissue distribution, widely expressed with higher expression in the testis in both germ cells and Sertoli cells.

Its subcellular location is the nucleus. It is found in the cytoplasm. The protein localises to the cell projection. It localises to the axon. The protein resides in the PML body. It catalyses the reaction S-ubiquitinyl-[E2 ubiquitin-conjugating enzyme]-L-cysteine + [acceptor protein]-L-lysine = [E2 ubiquitin-conjugating enzyme]-L-cysteine + N(6)-ubiquitinyl-[acceptor protein]-L-lysine.. It participates in protein modification; protein ubiquitination. Functionally, E3 ubiquitin-protein ligase mediating 'Lys-48'-linked polyubiquitination of LIMK1 and its subsequent targeting to the proteasome for degradation. Negatively regulates axonal outgrowth through regulation of the LIMK1 turnover. Mediates 'Lys-6' and 'Lys-27'-linked polyubiquitination of AR/androgen receptor thereby modulating its transcriptional activity. May also bind DNA and function as a transcriptional regulator. Mediates polyubiquitination of QKI in macrophages, leading to its degradation. This is E3 ubiquitin-protein ligase RNF6 from Mus musculus (Mouse).